The primary structure comprises 349 residues: Glycerol-1-phosphate dehydrogenase [NAD(P)+] (349 aa).

Residues 95-99 (GKSID) and 117-120 (TSPS) contribute to the NAD(+) site. Substrate is bound at residue D122. Position 126 (S126) interacts with NAD(+). D169 contacts substrate. Zn(2+) contacts are provided by D169 and H249. Residue H253 participates in substrate binding. H265 serves as a coordination point for Zn(2+).

It belongs to the glycerol-1-phosphate dehydrogenase family. As to quaternary structure, homodimer. Requires Zn(2+) as cofactor.

The protein localises to the cytoplasm. The enzyme catalyses sn-glycerol 1-phosphate + NAD(+) = dihydroxyacetone phosphate + NADH + H(+). It catalyses the reaction sn-glycerol 1-phosphate + NADP(+) = dihydroxyacetone phosphate + NADPH + H(+). Its pathway is membrane lipid metabolism; glycerophospholipid metabolism. Its function is as follows. Catalyzes the NAD(P)H-dependent reduction of dihydroxyacetonephosphate (DHAP or glycerone phosphate) to glycerol 1-phosphate (G1P). The G1P thus generated is used as the glycerophosphate backbone of phospholipids in the cellular membranes of Archaea. In Hyperthermus butylicus (strain DSM 5456 / JCM 9403 / PLM1-5), this protein is Glycerol-1-phosphate dehydrogenase [NAD(P)+].